Consider the following 83-residue polypeptide: Putative beta-neurotoxin RjAa17f (83 aa).

The first 18 residues, 1-18, serve as a signal peptide directing secretion; sequence MKILIFIIASFMLIGVEC. In terms of domain architecture, LCN-type CS-alpha/beta spans 19-82; sequence KEGYPMGRNG…VWDFSNIKCR (64 aa). 4 disulfide bridges follow: cysteine 29/cysteine 81, cysteine 33/cysteine 55, cysteine 40/cysteine 62, and cysteine 44/cysteine 64.

This sequence belongs to the long (4 C-C) scorpion toxin superfamily. Sodium channel inhibitor family. Beta subfamily. As to expression, expressed by the venom gland.

It is found in the secreted. Functionally, beta toxins bind voltage-independently at site-4 of sodium channels (Nav) and shift the voltage of activation toward more negative potentials thereby affecting sodium channel activation and promoting spontaneous and repetitive firing. The sequence is that of Putative beta-neurotoxin RjAa17f from Rhopalurus junceus (Caribbean blue scorpion).